A 264-amino-acid polypeptide reads, in one-letter code: Type III pantothenate kinase (264 aa).

6 to 13 is an ATP binding site; that stretch reads DSGNSRLK. Substrate is bound by residues Y92 and 99–102; that span reads GADR. Residue D101 is the Proton acceptor of the active site. Residue T127 coordinates ATP. T177 is a substrate binding site.

This sequence belongs to the type III pantothenate kinase family. In terms of assembly, homodimer. NH4(+) serves as cofactor. It depends on K(+) as a cofactor.

The protein localises to the cytoplasm. It carries out the reaction (R)-pantothenate + ATP = (R)-4'-phosphopantothenate + ADP + H(+). It functions in the pathway cofactor biosynthesis; coenzyme A biosynthesis; CoA from (R)-pantothenate: step 1/5. Its function is as follows. Catalyzes the phosphorylation of pantothenate (Pan), the first step in CoA biosynthesis. The chain is Type III pantothenate kinase from Bordetella petrii (strain ATCC BAA-461 / DSM 12804 / CCUG 43448).